An 828-amino-acid chain; its full sequence is DNA gyrase subunit A (828 aa).

One can recognise a Topo IIA-type catalytic domain in the interval 32–497 (LPDVRDGLKP…EVLSLEDEDL (466 aa)). The active-site O-(5'-phospho-DNA)-tyrosine intermediate is the Tyr120. The GyrA-box motif lies at 524–530 (QKRGGRG).

It belongs to the type II topoisomerase GyrA/ParC subunit family. In terms of assembly, heterotetramer, composed of two GyrA and two GyrB chains. In the heterotetramer, GyrA contains the active site tyrosine that forms a transient covalent intermediate with DNA, while GyrB binds cofactors and catalyzes ATP hydrolysis.

The protein localises to the cytoplasm. It catalyses the reaction ATP-dependent breakage, passage and rejoining of double-stranded DNA.. In terms of biological role, a type II topoisomerase that negatively supercoils closed circular double-stranded (ds) DNA in an ATP-dependent manner to modulate DNA topology and maintain chromosomes in an underwound state. Negative supercoiling favors strand separation, and DNA replication, transcription, recombination and repair, all of which involve strand separation. Also able to catalyze the interconversion of other topological isomers of dsDNA rings, including catenanes and knotted rings. Type II topoisomerases break and join 2 DNA strands simultaneously in an ATP-dependent manner. The sequence is that of DNA gyrase subunit A from Streptococcus pyogenes serotype M3 (strain ATCC BAA-595 / MGAS315).